A 95-amino-acid polypeptide reads, in one-letter code: Aspartyl/glutamyl-tRNA(Asn/Gln) amidotransferase subunit C (95 aa).

The protein belongs to the GatC family. As to quaternary structure, heterotrimer of A, B and C subunits.

It carries out the reaction L-glutamyl-tRNA(Gln) + L-glutamine + ATP + H2O = L-glutaminyl-tRNA(Gln) + L-glutamate + ADP + phosphate + H(+). The catalysed reaction is L-aspartyl-tRNA(Asn) + L-glutamine + ATP + H2O = L-asparaginyl-tRNA(Asn) + L-glutamate + ADP + phosphate + 2 H(+). Functionally, allows the formation of correctly charged Asn-tRNA(Asn) or Gln-tRNA(Gln) through the transamidation of misacylated Asp-tRNA(Asn) or Glu-tRNA(Gln) in organisms which lack either or both of asparaginyl-tRNA or glutaminyl-tRNA synthetases. The reaction takes place in the presence of glutamine and ATP through an activated phospho-Asp-tRNA(Asn) or phospho-Glu-tRNA(Gln). This is Aspartyl/glutamyl-tRNA(Asn/Gln) amidotransferase subunit C from Cereibacter sphaeroides (strain ATCC 17025 / ATH 2.4.3) (Rhodobacter sphaeroides).